The chain runs to 232 residues: Ribose-5-phosphate isomerase A (232 aa).

Residues 31 to 34 (TGST), 87 to 90 (DGAD), and 100 to 103 (KGGG) each bind substrate. Glutamate 109 acts as the Proton acceptor in catalysis. Lysine 127 serves as a coordination point for substrate.

It belongs to the ribose 5-phosphate isomerase family. Homodimer.

It carries out the reaction aldehydo-D-ribose 5-phosphate = D-ribulose 5-phosphate. The protein operates within carbohydrate degradation; pentose phosphate pathway; D-ribose 5-phosphate from D-ribulose 5-phosphate (non-oxidative stage): step 1/1. Catalyzes the reversible conversion of ribose-5-phosphate to ribulose 5-phosphate. This chain is Ribose-5-phosphate isomerase A, found in Bifidobacterium adolescentis (strain ATCC 15703 / DSM 20083 / NCTC 11814 / E194a).